The primary structure comprises 369 residues: UDP-N-acetylglucosamine--N-acetylmuramyl-(pentapeptide) pyrophosphoryl-undecaprenol N-acetylglucosamine transferase (369 aa).

UDP-N-acetyl-alpha-D-glucosamine is bound by residues 10–12 (TAG), Asn124, Arg161, Ser195, and Gln295.

The protein belongs to the glycosyltransferase 28 family. MurG subfamily.

It localises to the cell membrane. The enzyme catalyses di-trans,octa-cis-undecaprenyl diphospho-N-acetyl-alpha-D-muramoyl-L-alanyl-D-glutamyl-meso-2,6-diaminopimeloyl-D-alanyl-D-alanine + UDP-N-acetyl-alpha-D-glucosamine = di-trans,octa-cis-undecaprenyl diphospho-[N-acetyl-alpha-D-glucosaminyl-(1-&gt;4)]-N-acetyl-alpha-D-muramoyl-L-alanyl-D-glutamyl-meso-2,6-diaminopimeloyl-D-alanyl-D-alanine + UDP + H(+). Its pathway is cell wall biogenesis; peptidoglycan biosynthesis. Functionally, cell wall formation. Catalyzes the transfer of a GlcNAc subunit on undecaprenyl-pyrophosphoryl-MurNAc-pentapeptide (lipid intermediate I) to form undecaprenyl-pyrophosphoryl-MurNAc-(pentapeptide)GlcNAc (lipid intermediate II). This chain is UDP-N-acetylglucosamine--N-acetylmuramyl-(pentapeptide) pyrophosphoryl-undecaprenol N-acetylglucosamine transferase, found in Acidothermus cellulolyticus (strain ATCC 43068 / DSM 8971 / 11B).